The chain runs to 1202 residues: MNKTKRKQQSNKVALKRDYKSDSDSDGDADALSTNDGFVEPEQKPIISKPPQKKKKYKDNETNKVKPPTIEEMKELRDTRNLFHSNLFKLQVKEMLEELHLKSKYTDYIDKWLENFTTFTEQLEDGLMDRCQLEVPLHLHKKTINFIFSKPEQPPQLIGAASQGTLLQPNFIVDIALEMPKKCFEKDDYLNLIYDQKRALYLAYVTDKMKSSSIYREDQFAYNYYANNPLKPVLELTPFAKIGKHLKFRLFITAPVETFRLGRFVPSNNNIRPILFNDEWNLEEQPLPSTQHYNANVLFDLTLSANQSLLNKSFQGRRNFQDGLLLLKVWLRQRQLDVGFSGFSSYILAMYIVHLNQQRVLHQSSSSYQVARTVWNQLANSDWTKGISLAQQATQEQLSFVVGFYDVCFMDITGHYNLCSNVPLAVYKRVREEAKLAVDLLNDMKINSFSYIFMQKCPLYTRVDNILKITKATSVQQLLLLQNHTEMKYDYANYGYPQMLKTLTDLLEKGLAQRIHGIIPLETAVSPWSVDSKAPIIGQSIQLGLILNPEHAYEVLDRGPASQDDDEGAAEFRSFWGDKSNLRRFQDGSICEAVVWAAVKDSPAKKRLIVKDICLHLLEHHFKLDKDDVQFIANELDIVYKLSPWFKVNKLMDKTKMKEELDQNTDSEALTPNVIRCYDELSRQLHGLNDLPLEIVSISGVSPIFRYCESQPVLPQTRLLANRRIHTNHVLRVVIQLGQSGKWPNELAALRALKTAFLIEIGEKLKEQCHLNWSLTSEGLLIIKRGYCFLIELAHSKESALLKQQINERGITTYVDNPQSRDLERRHYILPKVSGALHSLHQSHSAYGPTVLIAKQWLASQLIDDGLWSPMATELLVAYLYQQRHAPFITAAPQTGFIRLLQLMSLSDWQGELFLLNFNNSWEDQQIADLEHSFRSDRESYPPLALATSYDQQHAGRLWTTDETPNRLVLNHVSKLARHALELIETNLMSKSLQFLRPAQLFRASNEGYDLVIQLKPELLANSLNYDMGSPFVDFGQPNFNLPLAGQDRLAHIVAHLRSAYSDYAAFFYKPHGGKELAIMWKPPNVFAPKAFKVNELQASTPCVGNRNQVQVSRDTLLEDFKLLLKDFYARICTTEDLKREQKQHSKPKRYFQINPKQFENESMKPKKQIHKPTKAKTKTINTKKLKGKKILLKSKPIKALV.

The segment at methionine 1–lysine 64 is disordered.

The protein belongs to the NRAP family. Part of the small subunit (SSU) processome, composed of more than 70 proteins and the RNA chaperone small nucleolar RNA (snoRNA) U3.

The protein resides in the nucleus. The protein localises to the nucleolus. It is found in the chromosome. Functionally, part of the small subunit (SSU) processome, first precursor of the small eukaryotic ribosomal subunit. During the assembly of the SSU processome in the nucleolus, many ribosome biogenesis factors, an RNA chaperone and ribosomal proteins associate with the nascent pre-rRNA and work in concert to generate RNA folding, modifications, rearrangements and cleavage as well as targeted degradation of pre-ribosomal RNA by the RNA exosome. The protein is Nucleolar protein 6 of Drosophila willistoni (Fruit fly).